The following is a 491-amino-acid chain: Mitochondrial MYO2 receptor-related protein 1 (491 aa).

Position 12 is a phosphothreonine (Thr-12). A phosphoserine mark is found at Ser-16 and Ser-37. Residues 295–384 are a coiled coil; it reads NAEEANSREK…CKKVLKKLTE (90 aa). Positions 300 to 439 are interaction with MYO2; that stretch reads NSREKSNLDI…GTSSEEDHLT (140 aa). The disordered stretch occupies residues 419–491; the sequence is KKIEEQPDSS…LPVQVEKKEK (73 aa). The segment covering 461-472 has biased composition (polar residues); that stretch reads SAISTTASVQSG.

Interacts with MYO2 and PCL7. Post-translationally, phosphorylated by the cyclin-CDK PCL7-PHO85.

The protein localises to the bud tip. It localises to the bud neck. Its subcellular location is the mitochondrion outer membrane. In terms of biological role, involved in the guiding of mitochondrial tubules to the bud tip during cell division. The sequence is that of Mitochondrial MYO2 receptor-related protein 1 (MMR1) from Saccharomyces cerevisiae (strain ATCC 204508 / S288c) (Baker's yeast).